A 528-amino-acid polypeptide reads, in one-letter code: Abrin-d (528 aa).

Glutamine 1 is subject to Pyrrolidone carboxylic acid. Glutamate 164 is a catalytic residue. Residue asparagine 200 is glycosylated (N-linked (GlcNAc...) asparagine). 3 disulfide bridges follow: cysteine 247/cysteine 269, cysteine 286/cysteine 305, and cysteine 329/cysteine 346. The Ricin B-type lectin 1 domain maps to 273-400 (YEPTVRIGGR…YLMRQGWRTG (128 aa)). Residues 283-325 (DGMCVDVYDDGYHNGNRIIAWKCKDRLEENQLWTLKSDLTIRS) form a 1-alpha repeat. Residues 326–366 (NGKCLTTEGYAPGNYVMIYDCTSAVAEATYWEIWDNGTIIN) form a 1-beta repeat. N-linked (GlcNAc...) asparagine glycosylation is found at asparagine 361 and asparagine 401. The stretch at 369–401 (SALVLSAESSSMGGTLTVQTNEYLMRQGWRTGN) is one 1-gamma repeat. The Ricin B-type lectin 2 domain occupies 403–527 (TSPFVTSISG…GKPNQIWLTL (125 aa)). One copy of the 2-alpha repeat lies at 414–449 (SDLCMQAQGSNVWLADCDNNKKEQQWALYTDGSIRS). Cystine bridges form between cysteine 417-cysteine 430 and cysteine 456-cysteine 473. One copy of the 2-beta repeat lies at 453–492 (TNNCLTSKDHKQGSPIVLMACSNGWASQRWLFKNDGSIYS). Residues 495–528 (DDMVMDVKGSDPSLKQIILWPYTGKPNQIWLTLF) form a 2-gamma repeat.

In the N-terminal section; belongs to the ribosome-inactivating protein family. Type 2 RIP subfamily. As to quaternary structure, disulfide-linked dimer of A and B chains.

The enzyme catalyses Endohydrolysis of the N-glycosidic bond at one specific adenosine on the 28S rRNA.. In terms of biological role, the A chain is responsible for inhibiting protein synthesis through the catalytic inactivation of 60S ribosomal subunits by removing adenine from position 4,324 of 28S rRNA. Its function is as follows. The B chain is a galactose-specific lectin that facilitates the binding of abrin to the cell membrane that precedes endocytosis. This is Abrin-d from Abrus precatorius (Indian licorice).